The primary structure comprises 396 residues: Ornithine aminotransferase (396 aa).

Lysine 255 carries the N6-(pyridoxal phosphate)lysine modification.

This sequence belongs to the class-III pyridoxal-phosphate-dependent aminotransferase family. OAT subfamily. The cofactor is pyridoxal 5'-phosphate.

It localises to the cytoplasm. The enzyme catalyses a 2-oxocarboxylate + L-ornithine = L-glutamate 5-semialdehyde + an L-alpha-amino acid. Its pathway is amino-acid biosynthesis; L-proline biosynthesis; L-glutamate 5-semialdehyde from L-ornithine: step 1/1. In terms of biological role, catalyzes the interconversion of ornithine to glutamate semialdehyde. This is Ornithine aminotransferase from Bacillus anthracis (strain A0248).